The following is a 125-amino-acid chain: Large ribosomal subunit protein bL12 (125 aa).

Belongs to the bacterial ribosomal protein bL12 family. Homodimer. Part of the ribosomal stalk of the 50S ribosomal subunit. Forms a multimeric L10(L12)X complex, where L10 forms an elongated spine to which 2 to 4 L12 dimers bind in a sequential fashion. Binds GTP-bound translation factors.

In terms of biological role, forms part of the ribosomal stalk which helps the ribosome interact with GTP-bound translation factors. Is thus essential for accurate translation. The sequence is that of Large ribosomal subunit protein bL12 from Chlorobium phaeobacteroides (strain DSM 266 / SMG 266 / 2430).